A 144-amino-acid chain; its full sequence is Large ribosomal subunit protein uL15 (144 aa).

The segment at 1–57 (MFLNTLRPGEGSKHAPKRVGRGIGSGLGKTGGRGHKGLKSRSGGSVKPGFEGGQMPL) is disordered. Residues 21 to 31 (RGIGSGLGKTG) are compositionally biased toward gly residues.

Belongs to the universal ribosomal protein uL15 family. As to quaternary structure, part of the 50S ribosomal subunit.

Functionally, binds to the 23S rRNA. The protein is Large ribosomal subunit protein uL15 of Marinomonas sp. (strain MWYL1).